The following is a 228-amino-acid chain: MEKKAFIPLLYLTSIVFLPWWVSFSFNKSLGSWIINWWNTSKSETFLNDIQEKSILEKLIEFEELFLLDEMIKEYPETHLQKFRIGIHKETIQLIKMHNADRIDTILHFSTNIICFVILSGYSFLVNEELFILNSWVQEFIYNLSDTIKALSILLLTDLCIGFHSPHGWELMISSFYKDFGFAHNDQIISGLVSTFPVIFDTIFKYWIFRYLNRVSPSLVVIYHSMND.

Helical transmembrane passes span 6–26, 113–133, and 188–208; these read FIPLLYLTSIVFLPWWVSFSF, IICFVILSGYSFLVNEELFIL, and IISGLVSTFPVIFDTIFKYWI.

The protein belongs to the CemA family.

The protein resides in the plastid. It is found in the chloroplast inner membrane. It catalyses the reaction K(+)(in) + H(+)(out) = K(+)(out) + H(+)(in). Functionally, contributes to K(+)/H(+) antiport activity by supporting proton efflux to control proton extrusion and homeostasis in chloroplasts in a light-dependent manner to modulate photosynthesis. Prevents excessive induction of non-photochemical quenching (NPQ) under continuous-light conditions. Indirectly promotes efficient inorganic carbon uptake into chloroplasts. The chain is Potassium/proton antiporter CemA from Populus alba (White poplar).